Here is a 318-residue protein sequence, read N- to C-terminus: 4-hydroxy-3-methylbut-2-enyl diphosphate reductase (318 aa).

C12 lines the [4Fe-4S] cluster pocket. Positions 41 and 74 each coordinate (2E)-4-hydroxy-3-methylbut-2-enyl diphosphate. Residues H41 and H74 each coordinate dimethylallyl diphosphate. 2 residues coordinate isopentenyl diphosphate: H41 and H74. C96 contributes to the [4Fe-4S] cluster binding site. H124 lines the (2E)-4-hydroxy-3-methylbut-2-enyl diphosphate pocket. H124 is a dimethylallyl diphosphate binding site. H124 serves as a coordination point for isopentenyl diphosphate. E126 (proton donor) is an active-site residue. Position 168 (T168) interacts with (2E)-4-hydroxy-3-methylbut-2-enyl diphosphate. C198 serves as a coordination point for [4Fe-4S] cluster. (2E)-4-hydroxy-3-methylbut-2-enyl diphosphate contacts are provided by S226, S227, N228, and S270. Dimethylallyl diphosphate contacts are provided by S226, S227, N228, and S270. Residues S226, S227, N228, and S270 each contribute to the isopentenyl diphosphate site.

This sequence belongs to the IspH family. The cofactor is [4Fe-4S] cluster.

The catalysed reaction is isopentenyl diphosphate + 2 oxidized [2Fe-2S]-[ferredoxin] + H2O = (2E)-4-hydroxy-3-methylbut-2-enyl diphosphate + 2 reduced [2Fe-2S]-[ferredoxin] + 2 H(+). The enzyme catalyses dimethylallyl diphosphate + 2 oxidized [2Fe-2S]-[ferredoxin] + H2O = (2E)-4-hydroxy-3-methylbut-2-enyl diphosphate + 2 reduced [2Fe-2S]-[ferredoxin] + 2 H(+). The protein operates within isoprenoid biosynthesis; dimethylallyl diphosphate biosynthesis; dimethylallyl diphosphate from (2E)-4-hydroxy-3-methylbutenyl diphosphate: step 1/1. It participates in isoprenoid biosynthesis; isopentenyl diphosphate biosynthesis via DXP pathway; isopentenyl diphosphate from 1-deoxy-D-xylulose 5-phosphate: step 6/6. In terms of biological role, catalyzes the conversion of 1-hydroxy-2-methyl-2-(E)-butenyl 4-diphosphate (HMBPP) into a mixture of isopentenyl diphosphate (IPP) and dimethylallyl diphosphate (DMAPP). Acts in the terminal step of the DOXP/MEP pathway for isoprenoid precursor biosynthesis. The polypeptide is 4-hydroxy-3-methylbut-2-enyl diphosphate reductase (Psychrobacter sp. (strain PRwf-1)).